We begin with the raw amino-acid sequence, 185 residues long: Orotate phosphoribosyltransferase (185 aa).

5-phospho-alpha-D-ribose 1-diphosphate contacts are provided by residues arginine 98, lysine 99, lysine 102, histidine 104, and 128–136; that span reads EDVTTTGGS. 2 residues coordinate orotate: threonine 132 and arginine 160.

This sequence belongs to the purine/pyrimidine phosphoribosyltransferase family. PyrE subfamily. Homodimer. The cofactor is Mg(2+).

The enzyme catalyses orotidine 5'-phosphate + diphosphate = orotate + 5-phospho-alpha-D-ribose 1-diphosphate. The protein operates within pyrimidine metabolism; UMP biosynthesis via de novo pathway; UMP from orotate: step 1/2. Functionally, catalyzes the transfer of a ribosyl phosphate group from 5-phosphoribose 1-diphosphate to orotate, leading to the formation of orotidine monophosphate (OMP). The protein is Orotate phosphoribosyltransferase of Bradyrhizobium sp. (strain BTAi1 / ATCC BAA-1182).